A 605-amino-acid chain; its full sequence is Condensin-2 complex subunit H2 (605 aa).

Thr19 is modified (phosphothreonine). Phosphoserine occurs at positions 95, 200, 208, 228, and 232. The tract at residues Leu194–Phe331 is disordered. The span at Gly256–Glu266 shows a compositional bias: acidic residues. 4 positions are modified to phosphoserine: Ser282, Ser284, Ser466, and Ser492.

This sequence belongs to the CND2 H2 (condensin-2 subunit 2) family. In terms of assembly, component of the condensin-2 complex, which contains the SMC2 and SMC4 heterodimer, and three non SMC subunits, NCAPG2, NCAPH2 and NCAPD3 that probably regulate the complex.

It localises to the nucleus. Its subcellular location is the chromosome. In terms of biological role, regulatory subunit of the condensin-2 complex, a complex that seems to provide chromosomes with an additional level of organization and rigidity and in establishing mitotic chromosome architecture. May promote the resolution of double-strand DNA catenanes (intertwines) between sister chromatids. Condensin-mediated compaction likely increases tension in catenated sister chromatids, providing directionality for type II topoisomerase-mediated strand exchanges toward chromatid decatenation. Required for decatenation of chromatin bridges at anaphase. Early in neurogenesis, may play an essential role to ensure accurate mitotic chromosome condensation in neuron stem cells, ultimately affecting neuron pool and cortex size. Seems to have lineage-specific role in T-cell development. This chain is Condensin-2 complex subunit H2 (NCAPH2), found in Homo sapiens (Human).